Consider the following 136-residue polypeptide: D-ribose pyranase (136 aa).

His20 functions as the Proton donor in the catalytic mechanism. Residues Asp28, His98, and 120–122 each bind substrate; that span reads YAN.

This sequence belongs to the RbsD / FucU family. RbsD subfamily. As to quaternary structure, homodecamer.

It localises to the cytoplasm. It catalyses the reaction beta-D-ribopyranose = beta-D-ribofuranose. It functions in the pathway carbohydrate metabolism; D-ribose degradation; D-ribose 5-phosphate from beta-D-ribopyranose: step 1/2. Its function is as follows. Catalyzes the interconversion of beta-pyran and beta-furan forms of D-ribose. This chain is D-ribose pyranase, found in Geobacillus kaustophilus (strain HTA426).